The chain runs to 166 residues: 16S rRNA aminocarboxypropyltransferase (166 aa).

Residues T17, I62, L84, Y99, and S103 each coordinate S-adenosyl-L-methionine.

The protein belongs to the TDD superfamily. TSR3 family.

The protein localises to the cytoplasm. The enzyme catalyses an N(1)-methylpseudouridine in rRNA + S-adenosyl-L-methionine = N(1)-methyl-N(3)-[(3S)-3-amino-3-carboxypropyl]pseudouridine in rRNA + S-methyl-5'-thioadenosine + H(+). Functionally, aminocarboxypropyltransferase that catalyzes the aminocarboxypropyl transfer on pseudouridine corresponding to position 914 in M.jannaschii 16S rRNA. It constitutes the last step in biosynthesis of the hypermodified N1-methyl-N3-(3-amino-3-carboxypropyl) pseudouridine (m1acp3-Psi). The chain is 16S rRNA aminocarboxypropyltransferase from Saccharolobus islandicus (strain Y.N.15.51 / Yellowstone #2) (Sulfolobus islandicus).